The chain runs to 347 residues: Olfactory receptor 13C3 (347 aa).

The Extracellular segment spans residues 1-55 (MIVQLICTVCFLAVNTFHVRSSFDFLKADDMGEINQTLVSEFLLLGLSGYPKIEI). N-linked (GlcNAc...) asparagine glycosylation occurs at asparagine 35. The helical transmembrane segment at 56–76 (VYFALILVMYLVILIGNGVLI) threads the bilayer. Over 77–84 (IASIFDSH) the chain is Cytoplasmic. A helical membrane pass occupies residues 85–105 (FHTPMYFFLGNLSFLDICYTS). Residues 106 to 129 (SSVPSTLVSLISKKRNISFSGCAV) lie on the Extracellular side of the membrane. Cysteine 127 and cysteine 219 form a disulfide bridge. A helical transmembrane segment spans residues 130–150 (QMFFGFAMGSTECLLLGMMAF). Over 151-169 (DRYVAICNPLRYPIILSKV) the chain is Cytoplasmic. Residues 170–190 (AYVLMASVSWLSGGINSAVQT) traverse the membrane as a helical segment. At 191-227 (LLAMRLPFCGNNIINHFACEILAVLKLACADISLNII) the chain is on the extracellular side. The helical transmembrane segment at 228-247 (TMVISNMAFLVLPLMVIFFS) threads the bilayer. The Cytoplasmic segment spans residues 248–267 (YMFILYTILQMNSATGRRKA). The chain crosses the membrane as a helical span at residues 268-288 (FSTCSAHLTVVIIFYGTIFFM). The Extracellular segment spans residues 289-307 (YAKPKSQDLIGEEKLQALD). Residues 308 to 328 (KLISLFYGVVTPMLNPILYSL) traverse the membrane as a helical segment. The Cytoplasmic segment spans residues 329–347 (RNKDVKAAVKYLLNKKPIH).

It belongs to the G-protein coupled receptor 1 family.

It is found in the cell membrane. Functionally, odorant receptor. This Homo sapiens (Human) protein is Olfactory receptor 13C3 (OR13C3).